We begin with the raw amino-acid sequence, 187 residues long: Ubiquinone biosynthesis protein COQ4 homolog, mitochondrial (187 aa).

Zn(2+)-binding residues include histidine 77, aspartate 78, histidine 81, and glutamate 93.

This sequence belongs to the COQ4 family. In terms of assembly, component of a multi-subunit COQ enzyme complex. It depends on Zn(2+) as a cofactor.

It localises to the mitochondrion inner membrane. The enzyme catalyses a 4-hydroxy-3-methoxy-5-(all-trans-polyprenyl)benzoate + H(+) = a 2-methoxy-6-(all-trans-polyprenyl)phenol + CO2. It functions in the pathway cofactor biosynthesis; ubiquinone biosynthesis. Lyase that catalyzes the C1-decarboxylation of 4-hydroxy-3-methoxy-5-(all-trans-polyprenyl)benzoic acid into 2-methoxy-6-(all-trans-polyprenyl)phenol during ubiquinone biosynthesis. This is Ubiquinone biosynthesis protein COQ4 homolog, mitochondrial from Leishmania braziliensis.